Reading from the N-terminus, the 180-residue chain is Shikimate kinase (180 aa).

14 to 19 (GAGKSC) is a binding site for ATP. Serine 18 serves as a coordination point for Mg(2+). Substrate is bound by residues aspartate 36, arginine 60, and glycine 82. Position 120 (arginine 120) interacts with ATP. Arginine 139 is a substrate binding site.

This sequence belongs to the shikimate kinase family. As to quaternary structure, monomer. Mg(2+) serves as cofactor.

It is found in the cytoplasm. It carries out the reaction shikimate + ATP = 3-phosphoshikimate + ADP + H(+). Its pathway is metabolic intermediate biosynthesis; chorismate biosynthesis; chorismate from D-erythrose 4-phosphate and phosphoenolpyruvate: step 5/7. Its function is as follows. Catalyzes the specific phosphorylation of the 3-hydroxyl group of shikimic acid using ATP as a cosubstrate. This Xanthomonas axonopodis pv. citri (strain 306) protein is Shikimate kinase.